The primary structure comprises 444 residues: tRNA (guanine-N(7)-)-methyltransferase non-catalytic subunit TRM82 (444 aa).

7 WD repeats span residues 1 to 47 (MSVI…WSDD), 48 to 99 (FDKI…LGAP), 100 to 147 (PIYS…KRFC), 148 to 192 (FSKR…EPIL), 193 to 237 (GHVS…DKWL), 238 to 279 (FGHK…STFD), and 308 to 354 (FAVS…ITFP). The segment at 55-92 (RNTTAKEQQGQSSENENENKKLKSNKGDSIKRTAAKVP) is disordered. Over residues 71–85 (NENKKLKSNKGDSIK) the composition is skewed to basic and acidic residues. Serine 93 is modified (phosphoserine).

This sequence belongs to the WD repeat TRM82 family. In terms of assembly, forms a heterodimer with the catalytic subunit TRM8.

Its subcellular location is the nucleus. The protein operates within tRNA modification; N(7)-methylguanine-tRNA biosynthesis. Required for the formation of N(7)-methylguanine at position 46 (m7G46) in tRNA, a modification required to maintain stability of tRNAs; its absence resulting in tRNA decay. In the complex, it is required to stabilize and induce conformational changes of the catalytic subunit. This is tRNA (guanine-N(7)-)-methyltransferase non-catalytic subunit TRM82 from Saccharomyces cerevisiae (strain ATCC 204508 / S288c) (Baker's yeast).